Consider the following 113-residue polypeptide: Urotensin-2B (113 aa).

Residues 1 to 27 form the signal peptide; sequence MKVFSTSLWCGLLTLLSVMNLFKSVRG. The propeptide occupies 28–103; the sequence is RPHLSSGHEL…LDNLSSSHTK (76 aa). C107 and C112 are oxidised to a cystine.

Belongs to the urotensin-2 family.

It localises to the secreted. In terms of biological role, potent vasoconstrictor. In Mus musculus (Mouse), this protein is Urotensin-2B (Uts2b).